Consider the following 272-residue polypeptide: Glutamate racemase (272 aa).

Residues 10 to 11 (DS) and 42 to 43 (YG) each bind substrate. The active-site Proton donor/acceptor is cysteine 74. 75-76 (NT) is a binding site for substrate. Cysteine 185 functions as the Proton donor/acceptor in the catalytic mechanism. A substrate-binding site is contributed by 186 to 187 (TH).

This sequence belongs to the aspartate/glutamate racemases family.

The catalysed reaction is L-glutamate = D-glutamate. The protein operates within cell wall biogenesis; peptidoglycan biosynthesis. Its function is as follows. Provides the (R)-glutamate required for cell wall biosynthesis. The polypeptide is Glutamate racemase (Bacillus velezensis (strain DSM 23117 / BGSC 10A6 / LMG 26770 / FZB42) (Bacillus amyloliquefaciens subsp. plantarum)).